A 267-amino-acid chain; its full sequence is Coiled-coil domain-containing protein 90B, mitochondrial (267 aa).

A mitochondrion-targeting transit peptide spans 1-47; it reads MKGSQLYRHLSLQGNRLHLHLFQGKKLQLHPSQGHKGTAHRTWKKGF. Residues 142–175 adopt a coiled-coil conformation; it reads LEKSEFATLRAENEKMKIELEHVRQHLLNETNRI. A helical transmembrane segment spans residues 244 to 266; that stretch reads TVRYMAASVFTCLAIALGFYRLW.

This sequence belongs to the CCDC90 family.

It is found in the mitochondrion membrane. The chain is Coiled-coil domain-containing protein 90B, mitochondrial (ccdc90b) from Xenopus tropicalis (Western clawed frog).